Reading from the N-terminus, the 302-residue chain is Urease accessory protein UreG (302 aa).

Composition is skewed to basic and acidic residues over residues 1–32, 40–56, and 64–76; these read MHDPGEHGHGRHDHDHDHDHVHDHDHDHDHVH, HEHEHAHEHAHGHEHGH, and HAHEHAHGHTHEH. Positions 1–76 are disordered; it reads MHDPGEHGHG…EHAHGHTHEH (76 aa). Position 105-112 (105-112) interacts with GTP; sequence GPVGSGKT.

The protein belongs to the SIMIBI class G3E GTPase family. UreG subfamily. In terms of assembly, homodimer. UreD, UreF and UreG form a complex that acts as a GTP-hydrolysis-dependent molecular chaperone, activating the urease apoprotein by helping to assemble the nickel containing metallocenter of UreC. The UreE protein probably delivers the nickel.

Its subcellular location is the cytoplasm. Facilitates the functional incorporation of the urease nickel metallocenter. This process requires GTP hydrolysis, probably effectuated by UreG. This is Urease accessory protein UreG from Sorangium cellulosum (strain So ce56) (Polyangium cellulosum (strain So ce56)).